A 131-amino-acid polypeptide reads, in one-letter code: Small ribosomal subunit protein uS8 (131 aa).

The protein belongs to the universal ribosomal protein uS8 family. Part of the 30S ribosomal subunit. Contacts proteins S5 and S12.

Its function is as follows. One of the primary rRNA binding proteins, it binds directly to 16S rRNA central domain where it helps coordinate assembly of the platform of the 30S subunit. This Bordetella avium (strain 197N) protein is Small ribosomal subunit protein uS8.